The sequence spans 128 residues: Large ribosomal subunit protein bL12 (128 aa).

This sequence belongs to the bacterial ribosomal protein bL12 family. Homodimer. Part of the ribosomal stalk of the 50S ribosomal subunit. Forms a multimeric L10(L12)X complex, where L10 forms an elongated spine to which 2 to 4 L12 dimers bind in a sequential fashion. Binds GTP-bound translation factors.

Functionally, forms part of the ribosomal stalk which helps the ribosome interact with GTP-bound translation factors. Is thus essential for accurate translation. This Petrotoga mobilis (strain DSM 10674 / SJ95) protein is Large ribosomal subunit protein bL12.